A 456-amino-acid polypeptide reads, in one-letter code: Adenylosuccinate lyase (456 aa).

Residues 15–16 (RY), 90–92 (NHD), and 122–123 (TS) contribute to the N(6)-(1,2-dicarboxyethyl)-AMP site. H171 serves as the catalytic Proton donor/acceptor. Q248 contacts N(6)-(1,2-dicarboxyethyl)-AMP. The active-site Proton donor/acceptor is S296. N(6)-(1,2-dicarboxyethyl)-AMP-binding positions include S297, 302–304 (KVN), N310, R336, and 341–345 (STVLR).

It belongs to the lyase 1 family. Adenylosuccinate lyase subfamily. Homotetramer. Residues from neighboring subunits contribute catalytic and substrate-binding residues to each active site.

The enzyme catalyses N(6)-(1,2-dicarboxyethyl)-AMP = fumarate + AMP. It catalyses the reaction (2S)-2-[5-amino-1-(5-phospho-beta-D-ribosyl)imidazole-4-carboxamido]succinate = 5-amino-1-(5-phospho-beta-D-ribosyl)imidazole-4-carboxamide + fumarate. The protein operates within purine metabolism; AMP biosynthesis via de novo pathway; AMP from IMP: step 2/2. It participates in purine metabolism; IMP biosynthesis via de novo pathway; 5-amino-1-(5-phospho-D-ribosyl)imidazole-4-carboxamide from 5-amino-1-(5-phospho-D-ribosyl)imidazole-4-carboxylate: step 2/2. In terms of biological role, catalyzes two reactions in de novo purine nucleotide biosynthesis. Catalyzes the breakdown of 5-aminoimidazole- (N-succinylocarboxamide) ribotide (SAICAR or 2-[5-amino-1-(5-phospho-beta-D-ribosyl)imidazole-4-carboxamido]succinate) to 5-aminoimidazole-4-carboxamide ribotide (AICAR or 5-amino-1-(5-phospho-beta-D-ribosyl)imidazole-4-carboxamide) and fumarate, and of adenylosuccinate (ADS or N(6)-(1,2-dicarboxyethyl)-AMP) to adenosine monophosphate (AMP) and fumarate. The sequence is that of Adenylosuccinate lyase (purB) from Pseudomonas aeruginosa (strain ATCC 15692 / DSM 22644 / CIP 104116 / JCM 14847 / LMG 12228 / 1C / PRS 101 / PAO1).